Reading from the N-terminus, the 489-residue chain is Bypass of stop codon protein 5 (489 aa).

A disordered region spans residues 1-42; sequence MQESKEPQNKFEGCQRISSSSSTLFGGTSFEEPRCGTSQGKE. Over residues 18–30 the composition is skewed to low complexity; it reads SSSSSTLFGGTSF. Phosphoserine is present on residues S111 and S350.

It belongs to the BUL1 family.

In terms of biological role, appears to play a role in translation fidelity, and may act when translation is compromised. May be a component of the ubiquitination pathway. This chain is Bypass of stop codon protein 5 (BSC5), found in Saccharomyces cerevisiae (strain ATCC 204508 / S288c) (Baker's yeast).